Reading from the N-terminus, the 97-residue chain is Protein RALF-like 2 (97 aa).

The first 25 residues, 1-25 (MEARHMLVTILLLSFVFMNIMKVEA), serve as a signal peptide directing secretion. Cystine bridges form between C42/C49 and C61/C67.

It belongs to the plant rapid alkalinization factor (RALF) family.

It localises to the secreted. Functionally, cell signaling peptide that may regulate plant stress, growth, and development. Mediates a rapid alkalinization of extracellular space by mediating a transient increase in the cytoplasmic Ca(2+) concentration leading to a calcium-dependent signaling events through a cell surface receptor and a concomitant activation of some intracellular mitogen-activated protein kinases. The protein is Protein RALF-like 2 (RALFL2) of Arabidopsis thaliana (Mouse-ear cress).